The chain runs to 1020 residues: LLGL scribble cell polarity complex component 2 (1020 aa).

14 WD repeats span residues 36–69 (SALGFSPSLELLAIGTRSGAIKLYGAPGVEFMGL), 76–117 (VTQV…IGRF), 132–169 (VTAVLAHSSGELLLLGTEGGHVFVVEVPGFRELEENNI), 193–227 (TLHENPLNPRQVLIGYSRGLMVLWDLDRQRPVQHF), 233–264 (LESVWWMEDGESILSSHSDGSYCQWTVTGEDP), 282–324 (AISK…KTHE), 332–364 (IIDFFVIREGENHKGEPSALVVLVEEELVVVDL), 386–462 (TCSH…YKLS), 506–581 (QKIH…FALV), 590–651 (TAIA…LRQS), 710–766 (VRTL…KEIQ), 775–827 (GLVV…VSSK), 832–884 (LTAV…VHYP), and 898–921 (VFTKYGQGFYLISPSEFERFSLST). Positions 935–968 (LQMRSKSPSSPVHRDLPDGVPTEHRNFKGDSEGY) are disordered. Basic and acidic residues predominate over residues 946–965 (VHRDLPDGVPTEHRNFKGDS).

Belongs to the WD repeat L(2)GL family. Post-translationally, phosphorylated.

It localises to the cytoplasm. Its subcellular location is the cytoskeleton. Its function is as follows. Essential for hemidesmosome formation and maintenance of the cytoskeleton elements as well as cellular morphology in the basal epidermis during development. Also involved in regulating growth of the basal epidermis. The chain is LLGL scribble cell polarity complex component 2 (llgl2) from Danio rerio (Zebrafish).